The sequence spans 232 residues: Nucleoside diphosphate kinase 2, chloroplastic (232 aa).

The N-terminal 79 residues, Met-1 to Ala-79, are a transit peptide targeting the chloroplast. The ATP site is built by Lys-92, Phe-140, Arg-168, Thr-174, Arg-185, and Asn-195. Catalysis depends on His-198, which acts as the Pros-phosphohistidine intermediate.

Belongs to the NDK family. Requires Mg(2+) as cofactor.

The protein localises to the plastid. It is found in the chloroplast. It carries out the reaction a 2'-deoxyribonucleoside 5'-diphosphate + ATP = a 2'-deoxyribonucleoside 5'-triphosphate + ADP. The enzyme catalyses a ribonucleoside 5'-diphosphate + ATP = a ribonucleoside 5'-triphosphate + ADP. Its function is as follows. Major role in the synthesis of nucleoside triphosphates other than ATP. The ATP gamma phosphate is transferred to the NDP beta phosphate via a ping-pong mechanism, using a phosphorylated active-site intermediate. In Nicotiana tabacum (Common tobacco), this protein is Nucleoside diphosphate kinase 2, chloroplastic.